Reading from the N-terminus, the 368-residue chain is tRNA/tmRNA (uracil-C(5))-methyltransferase (368 aa).

The S-adenosyl-L-methionine site is built by Gln-192, Tyr-220, Asn-225, Glu-241, and Asp-301. Cys-326 functions as the Nucleophile in the catalytic mechanism. The active-site Proton acceptor is Glu-360.

The protein belongs to the class I-like SAM-binding methyltransferase superfamily. RNA M5U methyltransferase family. TrmA subfamily.

The catalysed reaction is uridine(54) in tRNA + S-adenosyl-L-methionine = 5-methyluridine(54) in tRNA + S-adenosyl-L-homocysteine + H(+). The enzyme catalyses uridine(341) in tmRNA + S-adenosyl-L-methionine = 5-methyluridine(341) in tmRNA + S-adenosyl-L-homocysteine + H(+). Dual-specificity methyltransferase that catalyzes the formation of 5-methyluridine at position 54 (m5U54) in all tRNAs, and that of position 341 (m5U341) in tmRNA (transfer-mRNA). The polypeptide is tRNA/tmRNA (uracil-C(5))-methyltransferase (Actinobacillus pleuropneumoniae serotype 5b (strain L20)).